Consider the following 359-residue polypeptide: Alanine racemase, biosynthetic (359 aa).

Lysine 34 functions as the Proton acceptor; specific for D-alanine in the catalytic mechanism. N6-(pyridoxal phosphate)lysine is present on lysine 34. Arginine 129 serves as a coordination point for substrate. Tyrosine 255 serves as the catalytic Proton acceptor; specific for L-alanine. Methionine 303 serves as a coordination point for substrate.

It belongs to the alanine racemase family. As to quaternary structure, monomer but homodimer in the presence of the substrate. Pyridoxal 5'-phosphate serves as cofactor.

The enzyme catalyses L-alanine = D-alanine. Its pathway is amino-acid biosynthesis; D-alanine biosynthesis; D-alanine from L-alanine: step 1/1. The protein operates within cell wall biogenesis; peptidoglycan biosynthesis. Its function is as follows. Catalyzes the interconversion of L-alanine and D-alanine. This is Alanine racemase, biosynthetic (alr) from Shigella dysenteriae.